Consider the following 329-residue polypeptide: Beta-ketoacyl-[acyl-carrier-protein] synthase III (329 aa).

Catalysis depends on residues Cys123 and His256. Residues 257 to 261 (QANIR) form an ACP-binding region. Residue Asn286 is part of the active site.

It belongs to the thiolase-like superfamily. FabH family. As to quaternary structure, homodimer.

It localises to the cytoplasm. The enzyme catalyses malonyl-[ACP] + acetyl-CoA + H(+) = 3-oxobutanoyl-[ACP] + CO2 + CoA. The protein operates within lipid metabolism; fatty acid biosynthesis. Its function is as follows. Catalyzes the condensation reaction of fatty acid synthesis by the addition to an acyl acceptor of two carbons from malonyl-ACP. Catalyzes the first condensation reaction which initiates fatty acid synthesis and may therefore play a role in governing the total rate of fatty acid production. Possesses both acetoacetyl-ACP synthase and acetyl transacylase activities. Its substrate specificity determines the biosynthesis of branched-chain and/or straight-chain of fatty acids. This Burkholderia orbicola (strain AU 1054) protein is Beta-ketoacyl-[acyl-carrier-protein] synthase III.